Consider the following 443-residue polypeptide: ATP-dependent protease ATPase subunit HslU (443 aa).

Residues Ile-18, 60 to 65, Asp-256, Glu-321, and Arg-393 each bind ATP; that span reads GVGKTE.

The protein belongs to the ClpX chaperone family. HslU subfamily. A double ring-shaped homohexamer of HslV is capped on each side by a ring-shaped HslU homohexamer. The assembly of the HslU/HslV complex is dependent on binding of ATP.

The protein localises to the cytoplasm. ATPase subunit of a proteasome-like degradation complex; this subunit has chaperone activity. The binding of ATP and its subsequent hydrolysis by HslU are essential for unfolding of protein substrates subsequently hydrolyzed by HslV. HslU recognizes the N-terminal part of its protein substrates and unfolds these before they are guided to HslV for hydrolysis. The sequence is that of ATP-dependent protease ATPase subunit HslU from Salmonella arizonae (strain ATCC BAA-731 / CDC346-86 / RSK2980).